The primary structure comprises 328 residues: dITP/XTP pyrophosphatase (328 aa).

The unknown stretch occupies residues 1–129 (MSEKIYEYKD…ATSEQGFGDT (129 aa)). Residues 130 to 324 (ILIATRNEGK…KLMEVFPAWQ (195 aa)) form an NTP pyrophosphatase region. 134–139 (TRNEGK) contacts substrate. Residue aspartate 196 is the Proton acceptor of the active site. Residue aspartate 196 participates in Mg(2+) binding. Substrate-binding positions include serine 197, 280–283 (FGYD), lysine 303, and 308–309 (HR).

The protein belongs to the HAM1 NTPase family. Homodimer. It depends on Mg(2+) as a cofactor.

It catalyses the reaction XTP + H2O = XMP + diphosphate + H(+). The catalysed reaction is dITP + H2O = dIMP + diphosphate + H(+). It carries out the reaction ITP + H2O = IMP + diphosphate + H(+). Pyrophosphatase that catalyzes the hydrolysis of nucleoside triphosphates to their monophosphate derivatives, with a high preference for the non-canonical purine nucleotides XTP (xanthosine triphosphate), dITP (deoxyinosine triphosphate) and ITP. Seems to function as a house-cleaning enzyme that removes non-canonical purine nucleotides from the nucleotide pool, thus preventing their incorporation into DNA/RNA and avoiding chromosomal lesions. In Streptococcus pyogenes serotype M6 (strain ATCC BAA-946 / MGAS10394), this protein is dITP/XTP pyrophosphatase.